The primary structure comprises 92 residues: Small ribosomal subunit protein uS19c (92 aa).

The protein belongs to the universal ribosomal protein uS19 family.

Its subcellular location is the plastid. The protein localises to the chloroplast. In terms of biological role, protein S19 forms a complex with S13 that binds strongly to the 16S ribosomal RNA. The protein is Small ribosomal subunit protein uS19c (rps19) of Pisum sativum (Garden pea).